Here is a 110-residue protein sequence, read N- to C-terminus: Nucleoid-associated protein ESA_02800 (110 aa).

The interval 89 to 110 (QKEKMASVSSGMQLPPGFKMPF) is disordered.

Belongs to the YbaB/EbfC family. In terms of assembly, homodimer.

The protein resides in the cytoplasm. The protein localises to the nucleoid. Functionally, binds to DNA and alters its conformation. May be involved in regulation of gene expression, nucleoid organization and DNA protection. The chain is Nucleoid-associated protein ESA_02800 from Cronobacter sakazakii (strain ATCC BAA-894) (Enterobacter sakazakii).